The primary structure comprises 532 residues: 4-amino-L-phenylalanyl-[CmlP-peptidyl-carrier-protein] 3-hydroxylase (532 aa).

Fe cation-binding residues include H305, H307, D309, H310, E377, and D403.

It belongs to the metallo-beta-lactamase superfamily. Homodimer. Fe(2+) is required as a cofactor.

The catalysed reaction is 4-amino-L-phenylalanyl-[peptidyl-carrier protein] + AH2 + O2 = (2R)-2-(4-aminophenyl)-L-seryl-[peptidyl-carrier protein] + A + H2O. Its pathway is antibiotic biosynthesis. Functionally, involved in chloramphenicol biosynthesis. Catalyzes the beta-hydroxylation of 4-amino-L-phenylalanine (L-PAPA) covalently bound to CmlP to form L-p-aminophenylserine. The chain is 4-amino-L-phenylalanyl-[CmlP-peptidyl-carrier-protein] 3-hydroxylase from Streptomyces venezuelae (strain ATCC 10712 / CBS 650.69 / DSM 40230 / JCM 4526 / NBRC 13096 / PD 04745).